A 181-amino-acid polypeptide reads, in one-letter code: Adenylate kinase (181 aa).

ATP is bound at residue 10 to 15; it reads GAGKGT. An NMP region spans residues 30–59; the sequence is STGDLFRANIGEGTPLGIEAKQYIDAGKLV. Residues Thr31, Arg36, 57–59, 85–88, and Gln92 each bind AMP; these read KLV and GFPR. Positions 126 to 132 are LID; the sequence is SRGRADD. ATP is bound at residue Arg127. Residues Arg129 and Arg140 each contribute to the AMP site. ATP is bound at residue Gly166.

The protein belongs to the adenylate kinase family. In terms of assembly, monomer.

The protein resides in the cytoplasm. It catalyses the reaction AMP + ATP = 2 ADP. The protein operates within purine metabolism; AMP biosynthesis via salvage pathway; AMP from ADP: step 1/1. In terms of biological role, catalyzes the reversible transfer of the terminal phosphate group between ATP and AMP. Plays an important role in cellular energy homeostasis and in adenine nucleotide metabolism. This chain is Adenylate kinase, found in Corynebacterium glutamicum (strain R).